The chain runs to 386 residues: Bifunctional enzyme IspD/IspF (386 aa).

The interval 1–230 (MNSVPSLPGQ…LEEQSMSVIP (230 aa)) is 2-C-methyl-D-erythritol 4-phosphate cytidylyltransferase. The tract at residues 231-386 (RTGMGFDVHR…AQAVATVVSG (156 aa)) is 2-C-methyl-D-erythritol 2,4-cyclodiphosphate synthase. A divalent metal cation is bound by residues aspartate 237 and histidine 239. Residues 237-239 (DVH) and 263-264 (HS) each bind 4-CDP-2-C-methyl-D-erythritol 2-phosphate. An a divalent metal cation-binding site is contributed by histidine 271. 4-CDP-2-C-methyl-D-erythritol 2-phosphate contacts are provided by residues 285–287 (DIG), 361–364 (TTTE), and arginine 371.

In the N-terminal section; belongs to the IspD/TarI cytidylyltransferase family. IspD subfamily. The protein in the C-terminal section; belongs to the IspF family. It depends on a divalent metal cation as a cofactor.

It catalyses the reaction 2-C-methyl-D-erythritol 4-phosphate + CTP + H(+) = 4-CDP-2-C-methyl-D-erythritol + diphosphate. The catalysed reaction is 4-CDP-2-C-methyl-D-erythritol 2-phosphate = 2-C-methyl-D-erythritol 2,4-cyclic diphosphate + CMP. It participates in isoprenoid biosynthesis; isopentenyl diphosphate biosynthesis via DXP pathway; isopentenyl diphosphate from 1-deoxy-D-xylulose 5-phosphate: step 2/6. The protein operates within isoprenoid biosynthesis; isopentenyl diphosphate biosynthesis via DXP pathway; isopentenyl diphosphate from 1-deoxy-D-xylulose 5-phosphate: step 4/6. Its function is as follows. Bifunctional enzyme that catalyzes the formation of 4-diphosphocytidyl-2-C-methyl-D-erythritol from CTP and 2-C-methyl-D-erythritol 4-phosphate (MEP) (IspD), and catalyzes the conversion of 4-diphosphocytidyl-2-C-methyl-D-erythritol 2-phosphate (CDP-ME2P) to 2-C-methyl-D-erythritol 2,4-cyclodiphosphate (ME-CPP) with a corresponding release of cytidine 5-monophosphate (CMP) (IspF). The polypeptide is Bifunctional enzyme IspD/IspF (Novosphingobium aromaticivorans (strain ATCC 700278 / DSM 12444 / CCUG 56034 / CIP 105152 / NBRC 16084 / F199)).